A 481-amino-acid polypeptide reads, in one-letter code: Ribulose bisphosphate carboxylase large chain (481 aa).

Residues 1 to 2 (MS) constitute a propeptide that is removed on maturation. The residue at position 3 (Pro3) is an N-acetylproline. Lys14 carries the post-translational modification N6,N6,N6-trimethyllysine. Residues Asn123 and Thr173 each contribute to the substrate site. Lys175 acts as the Proton acceptor in catalysis. Substrate is bound at residue Lys177. 3 residues coordinate Mg(2+): Lys201, Asp203, and Glu204. Lys201 carries the N6-carboxylysine modification. The Proton acceptor role is filled by His294. Substrate is bound by residues Arg295, His327, and Ser379.

It belongs to the RuBisCO large chain family. Type I subfamily. As to quaternary structure, heterohexadecamer of 8 large chains and 8 small chains; disulfide-linked. The disulfide link is formed within the large subunit homodimers. Mg(2+) is required as a cofactor. The disulfide bond which can form in the large chain dimeric partners within the hexadecamer appears to be associated with oxidative stress and protein turnover.

Its subcellular location is the plastid. The enzyme catalyses 2 (2R)-3-phosphoglycerate + 2 H(+) = D-ribulose 1,5-bisphosphate + CO2 + H2O. It carries out the reaction D-ribulose 1,5-bisphosphate + O2 = 2-phosphoglycolate + (2R)-3-phosphoglycerate + 2 H(+). Its function is as follows. RuBisCO catalyzes two reactions: the carboxylation of D-ribulose 1,5-bisphosphate, the primary event in carbon dioxide fixation, as well as the oxidative fragmentation of the pentose substrate in the photorespiration process. Both reactions occur simultaneously and in competition at the same active site. The protein is Ribulose bisphosphate carboxylase large chain of Cuscuta sandwichiana (Kauna'oa).